The chain runs to 488 residues: Acetyl-coenzyme A carboxylase carboxyl transferase subunit beta, chloroplastic (488 aa).

The CoA carboxyltransferase N-terminal domain maps to 227-488 (LWIQCDNCYG…LHAFFPLNTN (262 aa)). The Zn(2+) site is built by cysteine 231, cysteine 234, cysteine 247, and cysteine 250. A C4-type zinc finger spans residues 231–250 (CDNCYGLMYKKVKMNVCEQC).

Belongs to the AccD/PCCB family. In terms of assembly, acetyl-CoA carboxylase is a heterohexamer composed of biotin carboxyl carrier protein, biotin carboxylase and 2 subunits each of ACCase subunit alpha and ACCase plastid-coded subunit beta (accD). It depends on Zn(2+) as a cofactor. As to expression, accumulates in fatty acids synthesizing tissues such as embryos, expanding leaves, flower buds, flowers, and developing siliques.

It localises to the plastid. It is found in the chloroplast membrane. Its subcellular location is the chloroplast stroma. It catalyses the reaction N(6)-carboxybiotinyl-L-lysyl-[protein] + acetyl-CoA = N(6)-biotinyl-L-lysyl-[protein] + malonyl-CoA. Its pathway is lipid metabolism; malonyl-CoA biosynthesis; malonyl-CoA from acetyl-CoA: step 1/1. Functionally, component of the acetyl coenzyme A carboxylase (ACC) complex. Biotin carboxylase (BC) catalyzes the carboxylation of biotin on its carrier protein (BCCP) and then the CO(2) group is transferred by the transcarboxylase to acetyl-CoA to form malonyl-CoA. This chain is Acetyl-coenzyme A carboxylase carboxyl transferase subunit beta, chloroplastic, found in Arabidopsis thaliana (Mouse-ear cress).